Reading from the N-terminus, the 354-residue chain is Histidinol-phosphate aminotransferase (354 aa).

Over residues 1–11 (MKSFLSDKAKS) the composition is skewed to basic and acidic residues. Residues 1–33 (MKSFLSDKAKSIEPYTPGEQPKDKNYIKLNTNE) form a disordered region. The residue at position 211 (K211) is an N6-(pyridoxal phosphate)lysine.

This sequence belongs to the class-II pyridoxal-phosphate-dependent aminotransferase family. Histidinol-phosphate aminotransferase subfamily. As to quaternary structure, homodimer. The cofactor is pyridoxal 5'-phosphate.

The catalysed reaction is L-histidinol phosphate + 2-oxoglutarate = 3-(imidazol-4-yl)-2-oxopropyl phosphate + L-glutamate. Its pathway is amino-acid biosynthesis; L-histidine biosynthesis; L-histidine from 5-phospho-alpha-D-ribose 1-diphosphate: step 7/9. This chain is Histidinol-phosphate aminotransferase, found in Brachyspira hyodysenteriae (strain ATCC 49526 / WA1).